Reading from the N-terminus, the 564-residue chain is Major facilitator superfamily transporter MPN_076 (564 aa).

Helical transmembrane passes span 1–21, 65–85, 89–109, 176–196, 220–240, 249–269, 306–326, 358–378, 404–424, 425–445, 457–477, and 501–521; these read MLWAIVLLGYLLFVVEWFVID, ITLLRAVGSVLCGIVVLKFGY, VMIMMGLMCLCFPFLIIGDPL, IAGYALFIIFRSTIAIGGTTL, NLWGFNSGIVVAFVPFLFQSV, VFILTALILIGFGILCVFAWF, MIGMYGICLVVLVNPLTGGWW, AGLPTLAILWVLGYGMGYMVF, IVIVLFAATLGVGTAVGFAFV, AIATFIGGSFAWSMQSTILIL, VSVLFGYIWGFGYVIYTAFDI, and GAIAGVALFAGLLLAAIAIVV.

Belongs to the major facilitator superfamily.

The protein resides in the cell membrane. The chain is Major facilitator superfamily transporter MPN_076 from Mycoplasma pneumoniae (strain ATCC 29342 / M129 / Subtype 1) (Mycoplasmoides pneumoniae).